Reading from the N-terminus, the 249-residue chain is Isoprenyl transferase 1 (249 aa).

Residue Asp-30 is part of the active site. Asp-30 provides a ligand contact to Mg(2+). Residues 31-34 (GNGR), Trp-35, Arg-43, His-47, and 75-77 (STE) contribute to the substrate site. Asn-78 (proton acceptor) is an active-site residue. Substrate is bound by residues Trp-79, Arg-81, Arg-198, and 204 to 206 (RMS). Glu-217 lines the Mg(2+) pocket.

Belongs to the UPP synthase family. In terms of assembly, homodimer. Mg(2+) serves as cofactor.

Catalyzes the condensation of isopentenyl diphosphate (IPP) with allylic pyrophosphates generating different type of terpenoids. This is Isoprenyl transferase 1 from Tropheryma whipplei (strain Twist) (Whipple's bacillus).